Here is a 191-residue protein sequence, read N- to C-terminus: Protein YceI (191 aa).

The N-terminal stretch at 1 to 22 (MKKSLLGLTFASLMFSAGSAVA) is a signal peptide.

The protein belongs to the UPF0312 family. Type 1 subfamily.

The protein resides in the periplasm. The protein is Protein YceI of Shigella flexneri.